The sequence spans 360 residues: Molybdenum import ATP-binding protein ModC (360 aa).

Residues 5–234 (VKLHLGYQDF…LDLPLALGDD (230 aa)) enclose the ABC transporter domain. 32-39 (GHSGSGKT) provides a ligand contact to ATP. Residues 295 to 360 (HSSILNRLPV…AQIKAVAVLA (66 aa)) enclose the Mop domain.

It belongs to the ABC transporter superfamily. Molybdate importer (TC 3.A.1.8) family. In terms of assembly, the complex is composed of two ATP-binding proteins (ModC), two transmembrane proteins (ModB) and a solute-binding protein (ModA).

It is found in the cell inner membrane. It catalyses the reaction molybdate(out) + ATP + H2O = molybdate(in) + ADP + phosphate + H(+). Its function is as follows. Part of the ABC transporter complex ModABC involved in molybdenum import. Responsible for energy coupling to the transport system. In Pseudomonas fluorescens (strain ATCC BAA-477 / NRRL B-23932 / Pf-5), this protein is Molybdenum import ATP-binding protein ModC.